The chain runs to 157 residues: Myosin essential light chain, striated adductor muscle (157 aa).

EF-hand domains follow at residues 7–44 (DEID…LGIN) and 82–117 (GTFA…LGER).

In molluscan muscle, calcium regulation is associated with myosin rather than with actin. Muscle myosin contains two types of light chains: the catalytic light chain, essential for ATPase activity, and the regulatory light chain, a calcium-binding protein responsible for Ca(2+) dependent binding and Ca(2+) dependent Mg-ATPase activity. The protein is Myosin essential light chain, striated adductor muscle of Argopecten irradians (Bay scallop).